The following is a 732-amino-acid chain: MKFDKPAGENPIDQLKVVGRPHDRIDGPLKTTGTARYAYEWHEESPNAAYGYIVGSAIAKGRLTALDTDAAQKAPGVLPVITASNAGALSKGDKNTARLLGGPTIEHYHQAIALVVAETFEQARAAASLVQAHYRRNKGAYSLADEKQAVSQPPEDTPDKNVGDFDGAFSSAAVKIDATYTTPDQSHMAMEPHASMAVWDGNKLTLWTSNQMIDWCRTDLAKTLKVPVENVRIISPYIGGGFGGKLFLRSDALLAALAARAVKRPVKVMLPRPSIPNNTTHRPATLQHLRIGADQSGKITAISHESWSGNLPGGTPETAVQQSELLYAGANRHTGLRLATLDLPEGNAMRAPGEAPGLMALEIAIDELAEKAGIDPVEFRILNDTQIDPADPTRRFSRRQLIECLRTGADKFGWKQRNATPGQVRDGEWLVGHGVAAGFRNNLLEKSGARVHLEPNGTVTVETDMTDIGTGSYTILAQTAAEMLGVPLEQVAVHLGDSSFPVSAGSGGQWGANTSTSGVYAACVKLREMIASAVGFDPEQSQFADGKITNGTRSAILHEATAGGRLTAEESIEFGTLSKEYQQSTFAGHFVEVGVHSATGEVRVRRMLAVCAAGRILNPKTARSQVIGAMTMGMGAALMEELAVDDRLGYFVNHDMAGYEVPVHADIPKQEVIFLDDTDPISSPMKAKGVGELGLCGVSAAIANAVYNATGIRVRDYPITLDKLLDKLPDVV.

Residues 241–242, 468–470, 511–512, 615–621, Q625, and 688–691 each bind Mo-molybdopterin cytosine dinucleotide; these read GF, IGT, GA, RILNPKT, and KGVG. E692 functions as the Proton acceptor in the catalytic mechanism.

It belongs to the xanthine dehydrogenase family. Heterotrimer composed of PaoA, PaoB and PaoC. Mo-molybdopterin cytosine dinucleotide is required as a cofactor.

Its subcellular location is the periplasm. The enzyme catalyses an aldehyde + A + H2O = a carboxylate + AH2 + H(+). Its function is as follows. Oxidizes aldehydes to the corresponding carboxylic acids with a preference for aromatic aldehydes. It might play a role in the detoxification of aldehydes to avoid cell damage. This Escherichia coli O157:H7 protein is Aldehyde oxidoreductase molybdenum-binding subunit PaoC.